Reading from the N-terminus, the 551-residue chain is MTIAAENLTANHPRRKWTDYFTFCVDHKVIGIQYLVTSFLFFFIGGSFAEAMRTELATPSPDFVQPEMYNQLMTLHGTIMIFLWIVPAGAAFANYLIPLMVGTEDMAFPRLNAVAFWLTPPGGILLISSFFVGAPQAGWTSYPPLSLLSGKWGEELWILSLLLVGTSSILGAINFVTTILKMRIKDMDLHSMPLFCWAMLATSSLILLSTPVLASALILLSFDLIAGTSFFNPVGGGDPVVYQHLFWFYSHPAVYIMILPFFGVISEVIPVHARKPIFGYRAIAYSSLAISFLGLIVWAHHMFTSGTPGWLRMFFMATTMLIAVPTGIKIFSWCGTLWGGKIQLNSAMLFAFGFLSSFMIGGLTGVMVASVPFDIHVHDTYFVVGHFHYVLFGGSAFALFSGVYHWFPKMTGRMVNEPLGRLHFILTFIGMNLTFMPMHELGLMGMNRRIALYDVEFQPLNVLSTIGAYVLAASTIPFVINVFWSLFKGEKAARNPWRALTLEWQTASPPIIENFEEEPVLWCGPYDFGIDTELMDDEETVQTLIADAAGS.

A helical membrane pass occupies residues 29 to 49 (VIGIQYLVTSFLFFFIGGSFA). Residue His76 participates in Fe(II)-heme a binding. Helical transmembrane passes span 79 to 99 (IMIFLWIVPAGAAFANYLIPL), 113 to 133 (AVAFWLTPPGGILLISSFFVG), 156 to 176 (LWILSLLLVGTSSILGAINFV), 205 to 225 (LILLSTPVLASALILLSFDLI), 245 to 265 (LFWFYSHPAVYIMILPFFGVI), 283 to 303 (IAYSSLAISFLGLIVWAHHMF), 313 to 333 (MFFMATTMLIAVPTGIKIFSW), 348 to 368 (MLFAFGFLSSFMIGGLTGVMV), 382 to 402 (FVVGHFHYVLFGGSAFALFSG), 424 to 444 (FILTFIGMNLTFMPMHELGLM), and 466 to 486 (IGAYVLAASTIPFVINVFWSL). Cu cation-binding residues include His251, Tyr255, His300, and His301. Positions 251–255 (HPAVY) form a cross-link, 1'-histidyl-3'-tyrosine (His-Tyr). His386 contributes to the heme a3 binding site. His388 provides a ligand contact to Fe(II)-heme a.

Belongs to the heme-copper respiratory oxidase family. Requires Cu(2+) as cofactor. Heme is required as a cofactor.

Its subcellular location is the cell membrane. It carries out the reaction 4 Fe(II)-[cytochrome c] + O2 + 8 H(+)(in) = 4 Fe(III)-[cytochrome c] + 2 H2O + 4 H(+)(out). The protein operates within energy metabolism; oxidative phosphorylation. In terms of biological role, cytochrome c oxidase is the component of the respiratory chain that catalyzes the reduction of oxygen to water. Subunits 1-3 form the functional core of the enzyme complex. CO I is the catalytic subunit of the enzyme. Electrons originating in cytochrome c are transferred via the copper A center of subunit 2 and heme A of subunit 1 to the bimetallic center formed by heme A3 and copper B. This Synechocystis sp. (strain ATCC 27184 / PCC 6803 / Kazusa) protein is Cytochrome c oxidase subunit 1 (ctaD).